We begin with the raw amino-acid sequence, 274 residues long: Large ribosomal subunit protein uL2cz/uL2cy (274 aa).

Residues 224-274 (NPVDHPHGGGEGRAPIGRKKPATPWGYPALGRRSRKRNKYSDNLILRRRSK) are disordered.

This sequence belongs to the universal ribosomal protein uL2 family. As to quaternary structure, part of the 50S ribosomal subunit.

It is found in the plastid. The protein localises to the chloroplast. This is Large ribosomal subunit protein uL2cz/uL2cy (rpl2-A) from Carica papaya (Papaya).